A 338-amino-acid chain; its full sequence is Endonuclease V (338 aa).

Residues Asp-52 and Asp-126 each contribute to the Mg(2+) site. The disordered stretch occupies residues 253–338 (QLGVAPAQRK…PSPAWVQSPP (86 aa)). Basic and acidic residues-rich tracts occupy residues 260 to 270 (QRKDRSQKEQR) and 287 to 323 (RPPECDGRDSSSDRKAPEPGFQEQKDQQLEGTGHQED). Pro residues predominate over residues 328 to 338 (PPSPAWVQSPP).

It belongs to the endonuclease V family. In terms of assembly, monomer. Interacts with PABPC1; the interaction is RNA-dependent and stimulates ENDOV activity. Mg(2+) is required as a cofactor. In terms of tissue distribution, highest levels detected in liver with high levels also found in heart, kidney and testis. Expressed at low levels in brain.

Its subcellular location is the cytoplasm. The protein localises to the nucleus. It localises to the nucleolus. The protein resides in the stress granule. Its function is as follows. Endoribonuclease that specifically cleaves inosine-containing RNAs: cleaves RNA at the second phosphodiester bond 3' to inosine. Active against both single-stranded and double-stranded RNAs. Has strong preference for single-stranded RNAs (ssRNAs) toward double-stranded RNAs (dsRNAs). Cleaves mRNAs and tRNAs containing inosine. Also able to cleave structure-specific dsRNA substrates containing the specific sites 5'-IIUI-3' and 5'-UIUU-3'. Inosine is present in a number of RNAs following editing; the function of inosine-specific endoribonuclease is still unclear: it could either play a regulatory role in edited RNAs, or be involved in antiviral response by removing the hyperedited long viral dsRNA genome that has undergone A-to-I editing. Binds branched DNA structures. In Mus musculus (Mouse), this protein is Endonuclease V (Endov).